The primary structure comprises 473 residues: Levansucrase (473 aa).

An N-terminal signal peptide occupies residues 1–29; it reads MNIKKFAKQATVLTFTTALLAGGATQAFA. Sucrose contacts are provided by Trp-85, Asp-86, and Ser-164. Asp-86 serves as the catalytic Nucleophile. Residue Asp-241 participates in Ca(2+) binding. Sucrose is bound by residues Arg-246 and Asp-247. Positions 272, 308, 310, and 339 each coordinate Ca(2+). Glu-340 is a binding site for sucrose. Residue Glu-342 is the Proton donor/acceptor of the active site. Arg-360 is a sucrose binding site.

It belongs to the glycosyl hydrolase 68 family. Monomer.

It localises to the secreted. It carries out the reaction [6)-beta-D-fructofuranosyl-(2-&gt;](n) alpha-D-glucopyranoside + sucrose = [6)-beta-D-fructofuranosyl-(2-&gt;](n+1) alpha-D-glucopyranoside + D-glucose. Ca(2+) may play an important structural role and promote stability of levansucrase. The enzyme concentration is a factor defining the molecular weight (MW) levan distribution. A bimodal distribution is reported at the usual enzyme concentrations. At low concentrations, the enzyme synthesizes high MW levan, and at high concentrations, it synthesizes low MW levan. Catalyzes the synthesis of levan, a fructose polymer, by transferring the fructosyl moiety from sucrose to a growing acceptor molecule. Also displays sucrose hydrolase activity. At low sucrose concentrations, functions as an hydrolase with water as acceptor, whereas at higher substrate concentrations it adds fructosyl units to a growing levan chain. This Bacillus subtilis (strain 168) protein is Levansucrase.